The following is a 493-amino-acid chain: Beta-hexosaminidase Amuc_2018 (493 aa).

Residues 1–21 form the signal peptide; the sequence is MARPLPILGGILLSFSPPAEA. Arg122 provides a ligand contact to substrate. Active-site charge relay system residues include Asp151 and His214. The Zn(2+) site is built by Cys227 and Cys247. Residue Asp278 participates in substrate binding. Residue Glu279 is the Charge relay system of the active site. Cys288 and Cys291 together coordinate Zn(2+). Residues Trp345, 373 to 375, and 421 to 423 each bind substrate; these read YLD and WAE.

This sequence belongs to the glycosyl hydrolase 20 family.

The catalysed reaction is Hydrolysis of terminal non-reducing N-acetyl-D-hexosamine residues in N-acetyl-beta-D-hexosaminides.. Significantly inhibited by the addition of sodium dodecyl sulfate (SDS), but not by EDTA, urea, 2-mercaptoethanol or Triton X-100. Strongly inhibited by Cu2(+) ions, in case of which the activity is decreased by 70%. No significant inhibition with Al(3+), Fe(3+), Ca(2+), Cd(2+), Mg(2+), Mn(2+), Ni(2+) and Zn(2+) ions. Strongly inhibited by PugNAc (O-(2-acetamido-2-deoxy-D-glucopyranosylideneamino) N-phenylcarbamate) in the sub-micromolar concentration range. PugNAc at a concentration of 0.5 mM decreases the activity by 50% and the addition of 1 mM PugNAc fully inhibits the enzyme. No significant reduction in the activity by alkylation using N-ethylmaleimide or 2-iodoacetamide. In terms of biological role, hydrolyzes terminal GlcNAc residues from terminally unbranched N-glycans and from chitobiose. Hydrolyzes beta-1,6-linked N-acetylglucosamine and beta-1,4-linked N-acetylgalactosamine from pNP-alpha-GalNAc[beta1,3Gal]beta1,6GlcNAc and pNP-beta-GlcNAc-beta1,4-GalNAc substrates, respectively, as well as beta-1,2-linked N-acetylglucosamine units from the non-reducing end of N-glycans. Hydrolyzes GlcNAc residues linked to alpha1,3- or alpha1,6-mannose branch, but has low activity on substrates with more than one GlcNAc residue on one of the mannose branches. Releases terminal GlcNAc moieties from the N-glycopeptide Gly-Glu-Asn-(GlcNAc2Man3GlcNAc2)-Arg with high efficiency. Has moderate hydrolytic activity on the chitobiose moiety of N-glycopeptide substrate Gly-Glu-Asn-(GlcNAc2)-Arg. Does not hydrolyze GlcNAc residues from N-glycan structures bearing a bisecting GlcNAc moiety (beta1,4-linked GlcNAc to the beta1,4-linked core mannose). Potentially capable of cleaving the specific glycoside linkages in the process of mucin degradation in human intestinal tract. Hydrolyzes synthetic substrate pNP-beta-GlcNAc with high activity and pNP-beta-GalNAc to a lesser extent. Does not hydrolyze pNP-beta-glucose, pNP-beta-galactose, pNP-alpha-glucose, pNP-alpha-galactose, pNP-alpha-GlcNAc or pNP-alpha-fucose. This is Beta-hexosaminidase Amuc_2018 from Akkermansia muciniphila (strain ATCC BAA-835 / DSM 22959 / JCM 33894 / BCRC 81048 / CCUG 64013 / CIP 107961 / Muc).